A 222-amino-acid polypeptide reads, in one-letter code: TPR repeat-containing protein BH2049 (222 aa).

2 TPR repeats span residues 34–67 (AEPL…NREH) and 169–202 (PVGL…KEDK).

The chain is TPR repeat-containing protein BH2049 from Halalkalibacterium halodurans (strain ATCC BAA-125 / DSM 18197 / FERM 7344 / JCM 9153 / C-125) (Bacillus halodurans).